We begin with the raw amino-acid sequence, 45 residues long: Large ribosomal subunit protein bL34 (45 aa).

Residues 22 to 45 are disordered; it reads RMRTKSGQNVIKARRRKGRARLTV. Residues 33–45 show a composition bias toward basic residues; it reads KARRRKGRARLTV.

This sequence belongs to the bacterial ribosomal protein bL34 family.

This is Large ribosomal subunit protein bL34 from Thermosynechococcus vestitus (strain NIES-2133 / IAM M-273 / BP-1).